The following is a 292-amino-acid chain: ATP synthase gamma chain (292 aa).

It belongs to the ATPase gamma chain family. In terms of assembly, F-type ATPases have 2 components, CF(1) - the catalytic core - and CF(0) - the membrane proton channel. CF(1) has five subunits: alpha(3), beta(3), gamma(1), delta(1), epsilon(1). CF(0) has three main subunits: a, b and c.

Its subcellular location is the cell inner membrane. Functionally, produces ATP from ADP in the presence of a proton gradient across the membrane. The gamma chain is believed to be important in regulating ATPase activity and the flow of protons through the CF(0) complex. The polypeptide is ATP synthase gamma chain (Hyphomonas neptunium (strain ATCC 15444)).